The sequence spans 149 residues: Probable microsomal glutathione S-transferase (149 aa).

The next 2 helical transmembrane spans lie at 7–27 (SIFPDFIVFPSAISTIAIGLW) and 123–143 (LSHISFFALLGGSAFGIGSSL).

The protein belongs to the MAPEG family.

It is found in the membrane. It carries out the reaction RX + glutathione = an S-substituted glutathione + a halide anion + H(+). Its function is as follows. May perform the conjugation of reduced glutathione to electrophiles. This chain is Probable microsomal glutathione S-transferase (mgst), found in Dictyostelium discoideum (Social amoeba).